The following is a 622-amino-acid chain: Palmitoyltransferase ZDHHC13 (622 aa).

Met1 is subject to N-acetylmethionine. The Cytoplasmic segment spans residues 1 to 291 (MEGPGLGSQC…RLWRWLQKCE (291 aa)). ANK repeat units lie at residues 43 to 78 (PLIE…VRQP), 81 to 110 (ENVS…VVDQ), 115 to 144 (LNST…DPTL), 148 to 177 (EGFS…SVNM), 181 to 211 (NGQT…SLNV), 216 to 245 (HQNT…SLDI), and 249 to 277 (KGET…KMRA). The chain crosses the membrane as a helical span at residues 292-312 (LFLLLMLSVITMWAIGYILDF). Residues 313–320 (NSDSWLLK) are Lumenal-facing. Residues 321-341 (GCLLVTLFFLTSLFPRFLVGY) traverse the membrane as a helical segment. Residues 342–347 (KNLVYL) lie on the Cytoplasmic side of the membrane. A helical membrane pass occupies residues 348–368 (PTAFLLSSVFWIFMTWFILFF). Residues 369-370 (PD) lie on the Lumenal side of the membrane. The helical transmembrane segment at 371–391 (LAGAPFYFSFIFSIVAFLYFF) threads the bilayer. Residues 392 to 470 (YKTWATDPGF…RCIGFGNHHY (79 aa)) lie on the Cytoplasmic side of the membrane. Residues 426-476 (TFCTSCLIRKPLRSLHCHVCNCCVARYDQHCLWTGRCIGFGNHHYYIFFLF) form the DHHC domain. Cys456 (S-palmitoyl cysteine intermediate) is an active-site residue. Residues 471–491 (YIFFLFFLSMVCGWIIYGSFI) traverse the membrane as a helical segment. Residues 492–518 (YLSSHCATTFKEDGLWTYLNQIVACSP) lie on the Lumenal side of the membrane. A helical transmembrane segment spans residues 519-539 (WVLYILMLATFHFSWSTFLLL). Topologically, residues 540–622 (NQLFQIAFLG…PAREKVLRSV (83 aa)) are cytoplasmic.

The protein belongs to the DHHC palmitoyltransferase family. AKR/ZDHHC17 subfamily. As to quaternary structure, interacts (via ANK repeats) with CLIP3. Interacts (via ANK repeats) with DNAJC5 (via C-terminus). Interacts (via ANK repeats) with HTT. Interacts (via ANK repeats) with MAP6. Interacts (via ANK repeats) with SNAP23. Interacts (via ANK repeats) with SNAP25. May interact (via ANK repeats) with SPRED2.

The protein localises to the golgi apparatus membrane. It is found in the cytoplasmic vesicle membrane. It carries out the reaction L-cysteinyl-[protein] + hexadecanoyl-CoA = S-hexadecanoyl-L-cysteinyl-[protein] + CoA. Functionally, palmitoyltransferase that could catalyze the addition of palmitate onto various protein substrates. Palmitoyltransferase for HTT and GAD2. May play a role in Mg(2+) transport. This chain is Palmitoyltransferase ZDHHC13, found in Homo sapiens (Human).